We begin with the raw amino-acid sequence, 587 residues long: Pyruvate decarboxylase 3 (587 aa).

Substrate contacts are provided by Asp-48 and His-135. A thiamine pyrophosphate binding region spans residues 415–496; it reads DSWFNCQKLR…FLINNGGYTI (82 aa). Mg(2+) contacts are provided by Asp-464, Asn-491, and Gly-493. Glu-497 is a substrate binding site.

It belongs to the TPP enzyme family. Homotetramer. Requires a metal cation as cofactor. The cofactor is thiamine diphosphate.

The catalysed reaction is a 2-oxocarboxylate + H(+) = an aldehyde + CO2. This Oryza sativa subsp. japonica (Rice) protein is Pyruvate decarboxylase 3 (PDC3).